Here is a 236-residue protein sequence, read N- to C-terminus: tRNA1(Val) (adenine(37)-N6)-methyltransferase (236 aa).

This sequence belongs to the methyltransferase superfamily. tRNA (adenine-N(6)-)-methyltransferase family.

Its subcellular location is the cytoplasm. The enzyme catalyses adenosine(37) in tRNA1(Val) + S-adenosyl-L-methionine = N(6)-methyladenosine(37) in tRNA1(Val) + S-adenosyl-L-homocysteine + H(+). Specifically methylates the adenine in position 37 of tRNA(1)(Val) (anticodon cmo5UAC). In Aeromonas salmonicida (strain A449), this protein is tRNA1(Val) (adenine(37)-N6)-methyltransferase.